The sequence spans 1355 residues: NACHT, LRR and PYD domains-containing protein 1 homolog (1355 aa).

The NACHT domain maps to 257–458; the sequence is KTVILCGDSG…SVPLLCWMVC (202 aa). 263-270 is a binding site for ATP; sequence GDSGRGKS. Residues 977–1109 form a ZU5 region; that stretch reads DSDQWVQVEP…FHAKILQPMF (133 aa). The region spanning 977–1252 is the FIIND domain; the sequence is DSDQWVQVEP…NKTESDLFQS (276 aa). Residues 1110–1252 form a UPA region; that stretch reads SPKTVLVKLG…NKTESDLFQS (143 aa). Residues 1278 to 1354 form the CARD domain; sequence LIKSVENVDT…NLLNHLPSSD (77 aa).

The protein belongs to the NLRP family. As to quaternary structure, interacts with the C-terminal part of nlrp1 (NACHT, LRR and PYD domains-containing protein 1, C-terminus) in absence of pathogens and other damage-associated signals. Interacts with the N-terminal part of nlrp1 (NACHT, LRR and PYD domains-containing protein 1, N-terminus) in absence of pathogens and other damage-associated signals. Homomultimer; forms the nlrp1 inflammasome polymeric complex, a filament composed of homopolymers of this form in response to pathogens and other damage-associated signals. The nlrp1 inflammasome polymeric complex associates with pycard/asc. Interacts (via CARD domain) with pycard/asc (via CARD domain); leading to pro-inflammatory caspases (caspa and/or caspb) recruitment. Pro-caspase-a and pro-caspase-b filament formation increases local enzyme concentration, resulting in trans-autocleavage and activation. Active caspa and caspb then processes il1b and il18 precursors, leading to the release of mature cytokines in the extracellular milieu and inflammatory response. Post-translationally, autocatalytically cleaved. Autocatalytic cleavage in FIIND region occurs constitutively, prior to activation signals, and is required for inflammasome activity (IL1B release), possibly by facilitating pro-inflammatory caspases (caspa and/or caspb) binding. Both N- and C-terminal parts remain associated non-covalently. Ubiquitinated in response to pathogen-associated signals, leading to its degradation by the proteasome and subsequent release of the cleaved C-terminal part of the protein (NACHT, LRR and PYD domains-containing protein 1, C-terminus), which polymerizes and forms the nlrp1 inflammasome. As to expression, expressed in adult spleen, head kidney, gill and skin and also in the embryo.

It localises to the cytoplasm. The protein localises to the inflammasome. Its activity is regulated as follows. nlrp1 inflammasome is activated by pathogens and other damage-associated signals: activation promotes ubiquitination and degradation of the N-terminal part, releasing the cleaved C-terminal part of the protein (NACHT, LRR and PYD domains-containing protein 1, C-terminus), which polymerizes and forms the nlrp1 inflammasome. Its function is as follows. Acts as the sensor component of the nlrp1 inflammasome, which mediates inflammasome activation in response to various pathogen-associated signals, leading to subsequent pyroptosis. Inflammasomes are supramolecular complexes that assemble in the cytosol in response to pathogens and other damage-associated signals and play critical roles in innate immunity and inflammation. Acts as a recognition receptor (PRR): recognizes specific pathogens and other damage-associated signals, and mediates the formation of the inflammasome polymeric complex. In response to pathogen-associated signals, the N-terminal part of nlrp1 is degraded by the proteasome, releasing the cleaved C-terminal part of the protein (NACHT, LRR and PYD domains-containing protein 1, C-terminus), which polymerizes to initiate the formation of the inflammasome complex: the inflammasome recruits and activate pro-inflammatory caspases (caspa and/or caspb), leading to pyroptosis. Functionally, constitutes the precursor of the nlrp1 inflammasome, which mediates autoproteolytic processing within the FIIND domain to generate the N-terminal and C-terminal parts, which are associated non-covalently in absence of pathogens and other damage-associated signals. Regulatory part that prevents formation of the nlrp1 inflammasome: in absence of pathogens and other damage-associated signals, interacts with the C-terminal part of nlrp1 (NACHT, LRR and PYD domains-containing protein 1, C-terminus), preventing activation of the nlrp1 inflammasome. In response to pathogen-associated signals, this part is ubiquitinated and degraded by the proteasome, releasing the cleaved C-terminal part of the protein, which polymerizes and forms the nlrp1 inflammasome. In terms of biological role, constitutes the active part of the nlrp1 inflammasome. In absence of pathogens and other damage-associated signals, interacts with the N-terminal part of nlrp1 (NACHT, LRR and PYD domains-containing protein 1, N-terminus), preventing activation of the nlrp1 inflammasome. In response to pathogen-associated signals, the N-terminal part of nlrp1 is degraded by the proteasome, releasing this form, which polymerizes to form the nlrp1 inflammasome complex: the nlrp1 inflammasome complex then directly recruits and activates pro-inflammatory caspases (caspa and/or caspb) activation, leading to subsequent pyroptosis. The protein is NACHT, LRR and PYD domains-containing protein 1 homolog of Danio rerio (Zebrafish).